The sequence spans 449 residues: Phosphoglucosamine mutase (449 aa).

The active-site Phosphoserine intermediate is serine 101. Mg(2+)-binding residues include serine 101, aspartate 240, aspartate 242, and aspartate 244. Serine 101 is modified (phosphoserine).

The protein belongs to the phosphohexose mutase family. It depends on Mg(2+) as a cofactor. Activated by phosphorylation.

It carries out the reaction alpha-D-glucosamine 1-phosphate = D-glucosamine 6-phosphate. Functionally, catalyzes the conversion of glucosamine-6-phosphate to glucosamine-1-phosphate. This chain is Phosphoglucosamine mutase, found in Streptococcus mutans serotype c (strain ATCC 700610 / UA159).